A 586-amino-acid polypeptide reads, in one-letter code: Putative ABC transporter ATP-binding protein MG187 homolog (586 aa).

The ABC transporter domain maps to isoleucine 13–leucine 464. Glycine 45–threonine 52 serves as a coordination point for ATP.

Belongs to the ABC transporter superfamily.

The sequence is that of Putative ABC transporter ATP-binding protein MG187 homolog from Mycoplasma pneumoniae (strain ATCC 29342 / M129 / Subtype 1) (Mycoplasmoides pneumoniae).